A 378-amino-acid polypeptide reads, in one-letter code: MKHSVHFGAGNIGRGFIGEILFKNGFHIDFVDVNNQIIHALNEKGKYEIEIAQKGQSRIEVTNVAGINSKEHPEQVIEAIQKTDIITTAIGPNILPFIAELLAKGIEARRVAGNTQALDVMACENMIGGSQFLYQEVKKYLSPEGLTFADNYIGFPNAAVDRIVPTQSHEDSLFVMVEPFNEWVVETKRLKNPDLRLEDVHYEEDLEPFIERKLFSVNSGHATSAYIGAHYGAKTILEALQNPNIKSRIESVLAEIRSLLIAKWNFDKKELENYHKVIIERFENPFIVDEVSRVARTPIRKLGYNERFIRPIRELKELSLSYKNLLKTVGYAFDYRDVNDEESIRLGELLAKQSVKDVVIQVTGLDDQELIERIVEYI.

Position 4 to 15 (4 to 15) interacts with NAD(+); sequence SVHFGAGNIGRG.

The protein belongs to the mannitol dehydrogenase family.

It carries out the reaction D-mannitol 1-phosphate + NAD(+) = beta-D-fructose 6-phosphate + NADH + H(+). This is Mannitol-1-phosphate 5-dehydrogenase from Streptococcus pneumoniae (strain ATCC 700669 / Spain 23F-1).